Here is a 172-residue protein sequence, read N- to C-terminus: Co-chaperone protein HscB homolog (172 aa).

The region spanning 2-69 (NHFELFNLPV…DSRAAYLLAL (68 aa)) is the J domain.

Belongs to the HscB family. Interacts with HscA and stimulates its ATPase activity.

In terms of biological role, co-chaperone involved in the maturation of iron-sulfur cluster-containing proteins. Seems to help targeting proteins to be folded toward HscA. In Acinetobacter baumannii (strain SDF), this protein is Co-chaperone protein HscB homolog.